We begin with the raw amino-acid sequence, 202 residues long: uncharacterized protein (202 aa).

The protein localises to the mitochondrion. This is an uncharacterized protein from Schizosaccharomyces pombe (strain 972 / ATCC 24843) (Fission yeast).